An 879-amino-acid polypeptide reads, in one-letter code: Alanine--tRNA ligase (879 aa).

The Zn(2+) site is built by His567, His571, Cys669, and His673.

This sequence belongs to the class-II aminoacyl-tRNA synthetase family. Zn(2+) is required as a cofactor.

The protein resides in the cytoplasm. The catalysed reaction is tRNA(Ala) + L-alanine + ATP = L-alanyl-tRNA(Ala) + AMP + diphosphate. Catalyzes the attachment of alanine to tRNA(Ala) in a two-step reaction: alanine is first activated by ATP to form Ala-AMP and then transferred to the acceptor end of tRNA(Ala). Also edits incorrectly charged Ser-tRNA(Ala) and Gly-tRNA(Ala) via its editing domain. The chain is Alanine--tRNA ligase from Lactobacillus acidophilus (strain ATCC 700396 / NCK56 / N2 / NCFM).